The chain runs to 141 residues: Hemoglobin subunit alpha (141 aa).

The Globin domain occupies 1 to 141; it reads VLSAADKTHV…VSTVLVSKYR (141 aa). Position 3 is a phosphoserine (Ser-3). The residue at position 7 (Lys-7) is an N6-succinyllysine. Thr-8 bears the Phosphothreonine mark. Lys-11 is subject to N6-succinyllysine. Position 16 is an N6-acetyllysine; alternate (Lys-16). An N6-succinyllysine; alternate modification is found at Lys-16. Phosphoserine is present on Ser-35. The residue at position 40 (Lys-40) is an N6-succinyllysine. Ser-49 carries the post-translational modification Phosphoserine. Residue His-58 participates in O2 binding. His-87 contacts heme b. Position 102 is a phosphoserine (Ser-102). Thr-108 is subject to Phosphothreonine. Phosphoserine is present on Ser-124. Phosphothreonine is present on Thr-134. At Ser-138 the chain carries Phosphoserine.

Belongs to the globin family. In terms of assembly, heterotetramer of two alpha chains and two beta chains. As to expression, red blood cells.

In terms of biological role, involved in oxygen transport from the lung to the various peripheral tissues. Hemopressin acts as an antagonist peptide of the cannabinoid receptor CNR1. Hemopressin-binding efficiently blocks cannabinoid receptor CNR1 and subsequent signaling. This Dasypus novemcinctus (Nine-banded armadillo) protein is Hemoglobin subunit alpha (HBA).